We begin with the raw amino-acid sequence, 420 residues long: Tryptophan--tRNA ligase (420 aa).

Positions 72–80 (PSGLPHFGH) match the 'HIGH' region motif. A 'KMSKS' region motif is present at residues 308-312 (KMSSS).

The protein belongs to the class-I aminoacyl-tRNA synthetase family.

The protein localises to the cytoplasm. It catalyses the reaction tRNA(Trp) + L-tryptophan + ATP = L-tryptophyl-tRNA(Trp) + AMP + diphosphate + H(+). In Archaeoglobus fulgidus (strain ATCC 49558 / DSM 4304 / JCM 9628 / NBRC 100126 / VC-16), this protein is Tryptophan--tRNA ligase.